The sequence spans 257 residues: Protein MoaE (257 aa).

6-29 (VITGGGTGIGAACARLMHPAGERV) provides a ligand contact to NAD(+). The tract at residues 75–96 (LMSSSAAPAGWATAPPPRPATA) is disordered. Ser-132 is a substrate binding site. Tyr-145 (proton acceptor) is an active-site residue.

Belongs to the short-chain dehydrogenases/reductases (SDR) family.

In terms of biological role, might catalyze the conversion of monoamine compounds or their metabolites. In Klebsiella aerogenes (Enterobacter aerogenes), this protein is Protein MoaE (moaE).